A 417-amino-acid chain; its full sequence is MAEIRNYTMNFGPQHPAAHGVLRLVLELDGEVIQRADPHIGLLHRGTEKLAENRTYLQSVPYMDRLDYVSMMVNEHAYVMAIEKLLGLEVPLRAQYIRVMFDEITRILNHLLWLGAHALDVGAMTVFLYAFREREDLFDCYEAVSGARMHAAYYRPGGVYRDLPDRMPQYEESTVRSKEDVKQLNENRQGSLLDFIEDFTNRFPAYVDEYETLLTDNRIWKQRTVGIGVVSPERAMALGMTGPMLRGSGVAWDLRKKQPYEVYDRLDFDIPIGVNGDCYDRYLVRIEEFRQSNRIIKQCIDWLRKNPGPVISDNTKVAPPPREEMKHDMEALIHHFKLFTEGFHVPAGEAYAAVEHPKGEFGIYLISDGANKPYRLKIRAPGFAHLAALDEMTRGHMIADLVAIIGTQDIVFGEIDR.

Belongs to the complex I 49 kDa subunit family. NDH-1 is composed of 14 different subunits. Subunits NuoB, C, D, E, F, and G constitute the peripheral sector of the complex.

The protein localises to the cell inner membrane. It catalyses the reaction a quinone + NADH + 5 H(+)(in) = a quinol + NAD(+) + 4 H(+)(out). In terms of biological role, NDH-1 shuttles electrons from NADH, via FMN and iron-sulfur (Fe-S) centers, to quinones in the respiratory chain. The immediate electron acceptor for the enzyme in this species is believed to be ubiquinone. Couples the redox reaction to proton translocation (for every two electrons transferred, four hydrogen ions are translocated across the cytoplasmic membrane), and thus conserves the redox energy in a proton gradient. This chain is NADH-quinone oxidoreductase subunit D, found in Methylobacillus flagellatus (strain ATCC 51484 / DSM 6875 / VKM B-1610 / KT).